The following is a 146-amino-acid chain: Leghemoglobin-3 (146 aa).

One can recognise a Globin domain in the interval 2–146 (GFTDKQEALV…LATAIKKAMV (145 aa)). Y29 is subject to Nitrated tyrosine. S44 contributes to the heme b binding site. The residue at position 44 (S44) is a Phosphoserine. H61 lines the O2 pocket. Heme b contacts are provided by K64, H93, and K96. Position 134 is a nitrated tyrosine (Y134).

Belongs to the plant globin family. Monomer. Post-translationally, nitrated in effective nodules and particularly in hypoxic conditions; this mechanism may play a protective role in the symbiosis by buffering toxic peroxynitrite NO(2)(-). Nitration level decrease during nodule senescence. In terms of processing, phosphorylation at Ser-44 disrupts the molecular environment of its porphyrin ring oxygen binding pocket, thus leading to a reduced oxygen consumption and to the delivery of oxygen O(2) to symbiosomes. As to expression, root nodules.

It is found in the cytoplasm. The protein resides in the cytosol. It localises to the nucleus. In terms of biological role, leghemoglobin that reversibly binds oxygen O(2) through a pentacoordinated heme iron. In root nodules, facilitates the diffusion of oxygen to the bacteroids while preventing the bacterial nitrogenase from being inactivated by buffering dioxygen, nitric oxide and carbon monoxide, and promoting the formation of reactive oxygen species (ROS, e.g. H(2)O(2)). This role is essential for symbiotic nitrogen fixation (SNF). The chain is Leghemoglobin-3 from Medicago sativa (Alfalfa).